Here is a 372-residue protein sequence, read N- to C-terminus: Oxysterol-binding protein 3 (372 aa).

Residues Met1–Glu10 are compositionally biased toward basic and acidic residues. The disordered stretch occupies residues Met1–Glu25.

This sequence belongs to the OSBP family.

In Dictyostelium discoideum (Social amoeba), this protein is Oxysterol-binding protein 3 (osbC).